Here is a 266-residue protein sequence, read N- to C-terminus: Pre-mRNA-splicing factor PRP11 (266 aa).

The tract at residues 1–21 (MNYLEGVGSKKGGGGIASESQ) is disordered. Residues 66 to 96 (LVCKLCNTMHMSWSSVERHLGGKKHGLNVLR) form a Matrin-type zinc finger.

This sequence belongs to the SF3A2 family. Belongs to the CWC complex (or CEF1-associated complex), a spliceosome sub-complex reminiscent of a late-stage spliceosome composed of the U2, U5 and U6 snRNAs and at least BUD13, BUD31, BRR2, CDC40, CEF1, CLF1, CUS1, CWC2, CWC15, CWC21, CWC22, CWC23, CWC24, CWC25, CWC27, ECM2, HSH155, IST3, ISY1, LEA1, MSL1, NTC20, PRP8, PRP9, PRP11, PRP19, PRP21, PRP22, PRP45, PRP46, SLU7, SMB1, SMD1, SMD2, SMD3, SMX2, SMX3, SNT309, SNU114, SPP2, SYF1, SYF2, RSE1 and YJU2. Interacts with CUS2.

The protein resides in the nucleus. MRNA splicing factors, PRP9, PRP11, and PRP21, are necessary for addition of the U2 snRNP to the pre-mRNA in an early step of spliceosome assembly. This Saccharomyces cerevisiae (strain ATCC 204508 / S288c) (Baker's yeast) protein is Pre-mRNA-splicing factor PRP11 (PRP11).